Here is a 265-residue protein sequence, read N- to C-terminus: Tryptophan synthase alpha chain (265 aa).

Residues E48 and D59 each act as proton acceptor in the active site.

It belongs to the TrpA family. Tetramer of two alpha and two beta chains.

It catalyses the reaction (1S,2R)-1-C-(indol-3-yl)glycerol 3-phosphate + L-serine = D-glyceraldehyde 3-phosphate + L-tryptophan + H2O. Its pathway is amino-acid biosynthesis; L-tryptophan biosynthesis; L-tryptophan from chorismate: step 5/5. Functionally, the alpha subunit is responsible for the aldol cleavage of indoleglycerol phosphate to indole and glyceraldehyde 3-phosphate. The sequence is that of Tryptophan synthase alpha chain from Pelagibacter ubique (strain HTCC1062).